The sequence spans 893 residues: Probable disease resistance protein At1g62630 (893 aa).

Positions 24–68 form a coiled coil; it reads GSYTHNLEKNLVALETTMEELKAKRDDLLRRLKREEDRGLQRLSE. In terms of domain architecture, NB-ARC spans 136–440; the sequence is TEQASTSAFE…CEEIIDGSEG (305 aa). ATP is bound at residue 179-186; the sequence is GMGGVGKT. LRR repeat units follow at residues 516-537, 538-559, 571-593, 595-617, 618-640, and 641-663; these read VVRRMSLMGNKIHHLVGSYECM, ELTTLLLGEGEYGSIWRWSEIK, KLAVLDLSHNQSLFELPEEISNL, SLKYLNLSHTGIRHLSKGIQELK, KIIHLNLEHTSKLESIDGISSLH, and NLKVLKLYGSRLPWDLNTVKELE.

It belongs to the disease resistance NB-LRR family.

Functionally, probable disease resistance protein. The sequence is that of Probable disease resistance protein At1g62630 from Arabidopsis thaliana (Mouse-ear cress).